The following is a 508-amino-acid chain: Probable zinc metalloprotease MCYG_04217 (508 aa).

Asparagine 111 carries an N-linked (GlcNAc...) asparagine glycan. Zn(2+) is bound by residues histidine 182, aspartate 202, and glutamate 238. The N-linked (GlcNAc...) asparagine glycan is linked to asparagine 253. Residue aspartate 265 participates in Zn(2+) binding. The region spanning 422-508 (MPRNVRVDTS…ERGVAVLPFP (87 aa)) is the Fibronectin type-III domain. A glycan (N-linked (GlcNAc...) asparagine) is linked at asparagine 435.

It belongs to the peptidase M28 family. M28B subfamily. Zn(2+) is required as a cofactor.

It localises to the secreted. This chain is Probable zinc metalloprotease MCYG_04217, found in Arthroderma otae (strain ATCC MYA-4605 / CBS 113480) (Microsporum canis).